The sequence spans 183 residues: Protein US32 (183 aa).

This sequence belongs to the herpesviridae US1 family.

The sequence is that of Protein US32 (US32) from Homo sapiens (Human).